The primary structure comprises 604 residues: Integrin alpha-IIb (604 aa).

The stretch at Gln-1 to Ser-61 is one FG-GAP repeat. The Extracellular segment spans residues Gln-1 to Arg-558. 5 residues coordinate Ca(2+): Asp-22, Asp-24, Asn-26, Tyr-28, and Asp-30. 2 cysteine pairs are disulfide-bonded: Cys-69–Cys-80 and Cys-86–Cys-141. Asn-166 is a glycosylation site (N-linked (GlcNAc...) asparagine). Intrachain disulfides connect Cys-198/Cys-204, Cys-270/Cys-283, Cys-422/Cys-486, and Cys-476/Cys-481. The N-linked (GlcNAc...) asparagine glycan is linked to Asn-276. A glycan (N-linked (GlcNAc...) asparagine) is linked at Asn-527. The chain crosses the membrane as a helical span at residues Ala-559–Trp-584. The Cytoplasmic portion of the chain corresponds to Lys-585 to Glu-604. A GFFKR motif motif is present at residues Gly-587–Arg-591.

The protein belongs to the integrin alpha chain family. Heterodimer of an alpha and a beta subunit. The alpha subunit is composed of a heavy and a light chain linked by a disulfide bond. Alpha-IIb associates with beta-3. Directly interacts with RNF181. Interacts (via C-terminus cytoplasmic tail region) with CIB1; the interaction is direct and calcium-dependent. Interacts (via C-terminus cytoplasmic tail region) with CIB2, CIB3 and CIB4; the interactions are stabilized/increased in a calcium and magnesium-dependent manner. ITGA2B:ITGB3 interacts with PPIA/CYPA; the interaction is ROS and PPIase activity-dependent and is increased in the presence of thrombin. ITGA2B:ITGB3 interacts with SELP (via C-type lectin domain); the interaction mediates cell-cell interaction and adhesion.

The protein localises to the membrane. Its function is as follows. Integrin alpha-IIb/beta-3 is a receptor for fibronectin, fibrinogen, plasminogen, prothrombin, thrombospondin and vitronectin. It recognizes the sequence R-G-D in a wide array of ligands. It recognizes the sequence H-H-L-G-G-G-A-K-Q-A-G-D-V in fibrinogen gamma chain. Following activation integrin alpha-IIb/beta-3 brings about platelet/platelet interaction through binding of soluble fibrinogen. This step leads to rapid platelet aggregation which physically plugs ruptured endothelial cell surface. The chain is Integrin alpha-IIb (ITGA2B) from Papio cynocephalus (Yellow baboon).